Here is a 402-residue protein sequence, read N- to C-terminus: MSLTGCLPPRPPCSMRRRTSGGGASVSPVVAMASTAGVGGIGNPTPRGKKPFAPWREVPPQVTHTLPPEKKEVFDSLEGWAADTILPYLKPVEESWQPQDHLPDPRSPSFGDEVAALRERAAGLPDDHLVCLVGDMVTEEALPTYQTMLNTMDGGVRDETGAGGSAWAVWTRAWAAEENRHGDLMNKYLYLTGRVDMRQVEKTIQYLIGSGMDPRTENDPYMGFIYTTFQERATSISHGNTARHAGRHGDAALARVCGTVAADEKRHEAAYAAIVAKLFEVDPDYTVRAFARMMRRKVAMPARLMYDGADDRLFARFAAVAQRLGVYTAADYAGIIEFLVARWGVPGLAAGLSGEGRRAQDFVCSLGPRFRRMEERAQEAAKRAPPAAAAPFSWIHGRQVQL.

The transit peptide at 1-32 directs the protein to the chloroplast; that stretch reads MSLTGCLPPRPPCSMRRRTSGGGASVSPVVAM. The disordered stretch occupies residues 1-66; it reads MSLTGCLPPR…EVPPQVTHTL (66 aa). Fe cation contacts are provided by glutamate 139, glutamate 178, histidine 181, glutamate 231, glutamate 264, and histidine 267.

This sequence belongs to the fatty acid desaturase type 2 family. Homodimer. Fe(2+) is required as a cofactor.

It is found in the plastid. Its subcellular location is the chloroplast. It functions in the pathway lipid metabolism; fatty acid metabolism. Introduces a cis double bond in the acyl chain of an acyl-[acyl-carrier protein]. This is Acyl-[acyl-carrier-protein] desaturase 3, chloroplastic from Oryza sativa subsp. japonica (Rice).